A 409-amino-acid chain; its full sequence is Lissencephaly-1 homolog (409 aa).

In terms of domain architecture, LisH spans 7–39 (QKEELNKAIADYLHQCGFEDTLNAFKQDANMPG). The stretch at 54 to 80 (TSVIRLQKKVMDLETRLSEAEKEVHHG) forms a coiled coil. Positions 72–95 (EAEKEVHHGGGPKKTRSPEDWIPR) are disordered. WD repeat units lie at residues 104–145 (GHRS…RTLK), 146–187 (GHTD…RTLH), 188–229 (GHDH…KTFQ), 231–269 (HGEWVRRVRPNADGSLIASCSNDQTIRVWVVASRECKCD), 272–332 (DHDH…CLVT), 335–374 (GHDNWVRAVMFHPGGKFIVSCSDDKTLRIWDYKNKRCAKT), and 377–409 (AHEHFVTTLDFHKSAPFVATGSVDLTLKVWECR).

Belongs to the WD repeat LIS1/nudF family.

It localises to the cytoplasm. The protein resides in the cytoskeleton. The protein localises to the microtubule organizing center. Its subcellular location is the centrosome. Its function is as follows. Positively regulates the activity of the minus-end directed microtubule motor protein dynein. May enhance dynein-mediated microtubule sliding by targeting dynein to the microtubule plus end. Required for several dynein- and microtubule-dependent processes. The polypeptide is Lissencephaly-1 homolog (Nematostella vectensis (Starlet sea anemone)).